The following is a 1130-amino-acid chain: ABC transporter ATM1 (1130 aa).

The transit peptide at 1–65 (MQPPTRAPFF…ESFHSSAFQL (65 aa)) directs the protein to the mitochondrion. 3 disordered regions span residues 191–212 (DAWTSGCSGQTDNATASPCVRP), 276–315 (HHAPLSRHSLQSLPESRIRGGTVSRGDSPGSLTLSPRNMS), and 341–385 (STFS…TSSP). 2 stretches are compositionally biased toward polar residues: residues 195-206 (SGCSGQTDNATA) and 305-315 (GSLTLSPRNMS). A helical transmembrane segment spans residues 406-426 (PNPTSLQLLFSLFPFLWPTAL). Positions 468–502 (PLSPSGASPSSGDTSLLASSGETSSSLSPSAAPAE) are enriched in low complexity. A disordered region spans residues 468-554 (PLSPSGASPS…AGKAGTSVGG (87 aa)). Residues 503 to 523 (GAREAGKSGESAGRERRDEGS) are compositionally biased toward basic and acidic residues. 5 helical membrane passes run 574–594 (IVSVPLGVVCGFPVARIAATG), 653–673 (VLLFQMVPTALEFALVLYLLG), 678–698 (GPVACITSLTMAVYVAFTAAV), 761–781 (LAFLNFGQQLIFNVGVLGSLA), and 791–811 (LLPVGHIVLVSSLLLQLAVPL). Residues 587–823 (VARIAATGFN…VGTIYRETSL (237 aa)) enclose the ABC transmembrane type-1 domain. The 255-residue stretch at 857 to 1111 (VAFENVRFAY…ERGLYRALWE (255 aa)) folds into the ABC transporter domain. Residue 910 to 917 (GPSGVGKS) coordinates ATP.

It belongs to the ABC transporter superfamily. ABCB family. Heavy Metal importer (TC 3.A.1.210) subfamily. Homodimer.

It localises to the mitochondrion membrane. Functionally, probably transports iron-sulfur clusters in an ATP-dependent manner. Plays a role in [Fe-S] proteins homeostasis. Required for optimal parasite growth and lytic cycle. The sequence is that of ABC transporter ATM1 from Toxoplasma gondii (strain ATCC 50611 / Me49).